The chain runs to 198 residues: (S)-2-hydroxypropylphosphonic acid epoxidase (198 aa).

Positions 15 to 70 (LKDRREQVKMDHAALASLLGETPETVAAWENGEGGELTLTQLGRIAHVLGTSIGAL) constitute an HTH cro/C1-type domain. K23 serves as a coordination point for substrate. The H-T-H motif DNA-binding region spans 26-45 (HAALASLLGETPETVAAWEN). Substrate is bound by residues R97, Y105, 135–138 (NSGH), and E142. A Cupin type-2 domain is found at 136–196 (SGHAGNEFLF…GTGSAKLIAV (61 aa)). Fe cation contacts are provided by H138, E142, and H180.

It belongs to the non-heme iron-dependent dioxygenase family. As to quaternary structure, homotetramer. The cofactor is Fe(2+).

The enzyme catalyses (S)-2-hydroxypropylphosphonate + H2O2 = (1R,2S)-epoxypropylphosphonate + 2 H2O. The protein operates within antibiotic biosynthesis; fosfomycin biosynthesis. Non-heme-dependent dioxygenase that catalyzes the oxidative epoxidation of (S)-2-hydroxypropylphosphonate into (1R,2S)-epoxypropylphosphonate, the final step in the biosynthesis of fosfomycin antibiotic. The polypeptide is (S)-2-hydroxypropylphosphonic acid epoxidase (hppE) (Streptomyces wedmorensis).